A 225-amino-acid chain; its full sequence is Uracil phosphoribosyltransferase (225 aa).

Position 36 to 40 (36 to 40 (KGLVR)) interacts with GTP. Residues Arg86, Arg111, and 145–153 (DPMLATGST) contribute to the 5-phospho-alpha-D-ribose 1-diphosphate site. Uracil is bound by residues Ile210 and 215–217 (GDA). 5-phospho-alpha-D-ribose 1-diphosphate is bound at residue Asp216.

The protein belongs to the UPRTase family. Mg(2+) serves as cofactor.

It carries out the reaction UMP + diphosphate = 5-phospho-alpha-D-ribose 1-diphosphate + uracil. The protein operates within pyrimidine metabolism; UMP biosynthesis via salvage pathway; UMP from uracil: step 1/1. Its activity is regulated as follows. Allosterically activated by GTP. Functionally, catalyzes the conversion of uracil and 5-phospho-alpha-D-ribose 1-diphosphate (PRPP) to UMP and diphosphate. This Haloarcula marismortui (strain ATCC 43049 / DSM 3752 / JCM 8966 / VKM B-1809) (Halobacterium marismortui) protein is Uracil phosphoribosyltransferase.